A 259-amino-acid chain; its full sequence is Global transcriptional regulator CodY (259 aa).

The GAF domain stretch occupies residues 1–155 (MALLQKTRII…GATVVGMEIL (155 aa)). The H-T-H motif DNA-binding region spans 203–222 (ASKIADRVGITRSVIVNALR). At serine 215 the chain carries Phosphoserine.

Belongs to the CodY family.

The protein localises to the cytoplasm. Its function is as follows. DNA-binding global transcriptional regulator which is involved in the adaptive response to starvation and acts by directly or indirectly controlling the expression of numerous genes in response to nutrient availability. During rapid exponential growth, CodY is highly active and represses genes whose products allow adaptation to nutrient depletion. The polypeptide is Global transcriptional regulator CodY (Bacillus velezensis (strain DSM 23117 / BGSC 10A6 / LMG 26770 / FZB42) (Bacillus amyloliquefaciens subsp. plantarum)).